An 837-amino-acid chain; its full sequence is Translation initiation factor IF-2 (837 aa).

Residues 97–139 (AEEIEAEQRRELEEQRAAEEAARLKAEQEARERAEEEARRQAE) are compositionally biased toward basic and acidic residues. Residues 97-253 (AEEIEAEQRR…QHGFQSPTGP (157 aa)) are disordered. Residues 140 to 175 (AAKAQTAETAAPAAAESASSAEPAQVVAAVEAAAPA) are compositionally biased toward low complexity. The span at 176–197 (PERKKEEPRRVEKPRSDDDERR) shows a compositional bias: basic and acidic residues. Positions 198–208 (DRKHAQHRPSL) are enriched in basic residues. Residues 219–229 (RSGEDEADGFR) show a composition bias toward basic and acidic residues. Residues 230-244 (RGGRGGKSKLKKRNQ) show a composition bias toward basic residues. The region spanning 337-504 (ARAPVVTVMG…AVLLQAEILE (168 aa)) is the tr-type G domain. Positions 346–353 (GHVDHGKT) are G1. GTP is bound at residue 346–353 (GHVDHGKT). Residues 371-375 (GITQH) are G2. The G3 stretch occupies residues 392–395 (DTPG). GTP is bound by residues 392-396 (DTPGH) and 446-449 (NKID). Residues 446 to 449 (NKID) form a G4 region. Positions 482-484 (SAK) are G5.

Belongs to the TRAFAC class translation factor GTPase superfamily. Classic translation factor GTPase family. IF-2 subfamily.

It localises to the cytoplasm. Its function is as follows. One of the essential components for the initiation of protein synthesis. Protects formylmethionyl-tRNA from spontaneous hydrolysis and promotes its binding to the 30S ribosomal subunits. Also involved in the hydrolysis of GTP during the formation of the 70S ribosomal complex. The polypeptide is Translation initiation factor IF-2 (Stutzerimonas stutzeri (strain A1501) (Pseudomonas stutzeri)).